The chain runs to 171 residues: MYVMFLLSILLVLGFVSISSKPSPIYGGVGLIVSGAVGCGIIMGFGGSFMGLMVFLIYLGGMLVVFGYTTAMATEEYPETWGSNVVIWGVVLLGVGMELFMVAWMVEYGGFGVGDVFGGVENWMIFESKEGGVIREDSLGVASLYNKASWFAAIAGWSLFISVLIVIEIIR.

A run of 5 helical transmembrane segments spans residues 1–21 (MYVM…ISSK), 25–44 (IYGG…IIMG), 49–71 (FMGL…YTTA), 85–105 (VVIW…VAWM), and 150–170 (WFAA…IEII).

This sequence belongs to the complex I subunit 6 family. Core subunit of respiratory chain NADH dehydrogenase (Complex I) which is composed of 45 different subunits.

It is found in the mitochondrion inner membrane. It catalyses the reaction a ubiquinone + NADH + 5 H(+)(in) = a ubiquinol + NAD(+) + 4 H(+)(out). In terms of biological role, core subunit of the mitochondrial membrane respiratory chain NADH dehydrogenase (Complex I) which catalyzes electron transfer from NADH through the respiratory chain, using ubiquinone as an electron acceptor. Essential for the catalytic activity and assembly of complex I. In Lemur catta (Ring-tailed lemur), this protein is NADH-ubiquinone oxidoreductase chain 6 (MT-ND6).